Consider the following 909-residue polypeptide: Protein translocase subunit SecA (909 aa).

ATP is bound by residues Gln-85, 103–107 (GEGKT), and Asp-512. The disordered stretch occupies residues 866-899 (HETSATGGEEEINKPVVKGKKIGRNDPCPCGSGK). Zn(2+)-binding residues include Cys-893, Cys-895, Cys-904, and Cys-905.

The protein belongs to the SecA family. As to quaternary structure, monomer and homodimer. Part of the essential Sec protein translocation apparatus which comprises SecA, SecYEG and auxiliary proteins SecDF. Other proteins may also be involved. Requires Zn(2+) as cofactor.

Its subcellular location is the cell membrane. The protein localises to the cytoplasm. It catalyses the reaction ATP + H2O + cellular proteinSide 1 = ADP + phosphate + cellular proteinSide 2.. In terms of biological role, part of the Sec protein translocase complex. Interacts with the SecYEG preprotein conducting channel. Has a central role in coupling the hydrolysis of ATP to the transfer of proteins into and across the cell membrane, serving as an ATP-driven molecular motor driving the stepwise translocation of polypeptide chains across the membrane. This chain is Protein translocase subunit SecA, found in Finegoldia magna (strain ATCC 29328 / DSM 20472 / WAL 2508) (Peptostreptococcus magnus).